We begin with the raw amino-acid sequence, 379 residues long: Chaperone protein DnaJ (379 aa).

Positions 5–70 (DYYEILGVSK…QKRAAYDQYG (66 aa)) constitute a J domain. A CR-type zinc finger spans residues 134-212 (GVTKEIRIPT…CHGHGRVEKS (79 aa)). Residues Cys147, Cys150, Cys164, Cys167, Cys186, Cys189, Cys200, and Cys203 each coordinate Zn(2+). 4 CXXCXGXG motif repeats span residues 147 to 154 (CDVCHGSG), 164 to 171 (CPTCHGSG), 186 to 193 (CPHCQGRG), and 200 to 207 (CHKCHGHG).

The protein belongs to the DnaJ family. Homodimer. It depends on Zn(2+) as a cofactor.

The protein localises to the cytoplasm. In terms of biological role, participates actively in the response to hyperosmotic and heat shock by preventing the aggregation of stress-denatured proteins and by disaggregating proteins, also in an autonomous, DnaK-independent fashion. Unfolded proteins bind initially to DnaJ; upon interaction with the DnaJ-bound protein, DnaK hydrolyzes its bound ATP, resulting in the formation of a stable complex. GrpE releases ADP from DnaK; ATP binding to DnaK triggers the release of the substrate protein, thus completing the reaction cycle. Several rounds of ATP-dependent interactions between DnaJ, DnaK and GrpE are required for fully efficient folding. Also involved, together with DnaK and GrpE, in the DNA replication of plasmids through activation of initiation proteins. This is Chaperone protein DnaJ from Salmonella agona (strain SL483).